Reading from the N-terminus, the 271-residue chain is Cobalt import ATP-binding protein CbiO (271 aa).

The ABC transporter domain maps to 2 to 236 (LATSDLWFRY…TEAMEHAGLT (235 aa)). An ATP-binding site is contributed by 34-41 (GANGCGKS).

The protein belongs to the ABC transporter superfamily. Cobalt importer (TC 3.A.1.18.1) family. As to quaternary structure, forms an energy-coupling factor (ECF) transporter complex composed of an ATP-binding protein (A component, CbiO), a transmembrane protein (T component, CbiQ) and 2 possible substrate-capture proteins (S components, CbiM and CbiN) of unknown stoichimetry. Expression of just CbiMN in E.coli confers some cobalt uptake.

The protein resides in the cell inner membrane. The protein operates within cofactor biosynthesis; adenosylcobalamin biosynthesis. In terms of biological role, part of the energy-coupling factor (ECF) transporter complex CbiMNOQ involved in cobalt import. The complex confers cobalt uptake upon expression in E.coli; can also transport nickel with a very low affinity. Presumably responsible for energy coupling to the transport system. This is Cobalt import ATP-binding protein CbiO from Salmonella typhimurium (strain LT2 / SGSC1412 / ATCC 700720).